The following is a 514-amino-acid chain: H/ACA ribonucleoprotein complex subunit DKC1 (514 aa).

At A2 the chain carries N-acetylalanine. Positions 2–21 (ADAEVIILPKKHKKKKERKS) are nucleolar localization. K20 is covalently cross-linked (Glycyl lysine isopeptide (Lys-Gly) (interchain with G-Cter in SUMO2)). S21 is modified (phosphoserine). Residues K39 and K43 each participate in a glycyl lysine isopeptide (Lys-Gly) (interchain with G-Cter in SUMO2) cross-link. D125 (nucleophile) is an active-site residue. K191 participates in a covalent cross-link: Glycyl lysine isopeptide (Lys-Gly) (interchain with G-Cter in SUMO2). The PUA domain maps to 296–371 (HKRLVMKDSA…IVAKIKRVIM (76 aa)). Phosphoserine is present on S387. Residue K394 forms a Glycyl lysine isopeptide (Lys-Gly) (interchain with G-Cter in SUMO2) linkage. K413 is covalently cross-linked (Glycyl lysine isopeptide (Lys-Gly) (interchain with G-Cter in SUMO1); alternate). K413 is covalently cross-linked (Glycyl lysine isopeptide (Lys-Gly) (interchain with G-Cter in SUMO2); alternate). Residues K424 and K433 each participate in a glycyl lysine isopeptide (Lys-Gly) (interchain with G-Cter in SUMO2) cross-link. Positions 443 to 514 (KTAKRKRESE…KAKEVELVSE (72 aa)) are disordered. Positions 446-514 (KRKRESESES…KAKEVELVSE (69 aa)) are nuclear and nucleolar localization. Residues S451, S453, and S455 each carry the phosphoserine modification. A Phosphothreonine modification is found at T458. K467 is covalently cross-linked (Glycyl lysine isopeptide (Lys-Gly) (interchain with G-Cter in SUMO2)). Over residues 468–480 (KEKKKSKKDKKAK) the composition is skewed to basic residues. Phosphoserine occurs at positions 485, 494, and 513.

It belongs to the pseudouridine synthase TruB family. As to quaternary structure, part of the H/ACA small nucleolar ribonucleoprotein (H/ACA snoRNP) complex, which contains NHP2/NOLA2, GAR1/NOLA1, NOP10/NOLA3, and DKC1/NOLA4, which is presumed to be the catalytic subunit. The complex contains a stable core formed by binding of one or two NOP10-DKC1 heterodimers to NHP2; GAR1 subsequently binds to this core via DKC1. The complex binds a box H/ACA small nucleolar RNA (snoRNA), which may target the specific site of modification within the RNA substrate. During assembly, the complex contains NAF1 instead of GAR1/NOLA1. The complex also interacts with TERC, which contains a 3'-terminal domain related to the box H/ACA snoRNAs. Specific interactions with snoRNAs or TERC are mediated by GAR1 and NHP2. Associates with NOLC1/NOPP140. H/ACA snoRNPs interact with the SMN complex, consisting of SMN1 or SMN2, GEMIN2/SIP1, DDX20/GEMIN3, and GEMIN4. This is mediated by interaction between GAR1 and SMN1 or SMN2. The SMN complex may be required for correct assembly of the H/ACA snoRNP complex. Component of the telomerase holoenzyme complex composed of one molecule of TERT, one molecule of WRAP53/TCAB1, two molecules of H/ACA ribonucleoprotein complex subunits DKC1, NOP10, NHP2 and GAR1, and a telomerase RNA template component (TERC). The telomerase holoenzyme complex is associated with TEP1, SMG6/EST1A and POT1. Interacts with SHQ1; this interaction may lead to the stabilization of DKC1, from the time of its synthesis until its association with NOP10, NHP2, and NAF1 at the nascent H/ACA RNA. Interacts with HMBOX1. Interacts with DHX36. In terms of tissue distribution, ubiquitously expressed.

The protein resides in the nucleus. Its subcellular location is the nucleolus. It localises to the cajal body. The protein localises to the cytoplasm. The catalysed reaction is uridine in 5S rRNA = pseudouridine in 5S rRNA. In terms of biological role, catalytic subunit of H/ACA small nucleolar ribonucleoprotein (H/ACA snoRNP) complex, which catalyzes pseudouridylation of rRNA. This involves the isomerization of uridine such that the ribose is subsequently attached to C5, instead of the normal N1. Each rRNA can contain up to 100 pseudouridine ('psi') residues, which may serve to stabilize the conformation of rRNAs. Required for ribosome biogenesis and telomere maintenance. Also required for correct processing or intranuclear trafficking of TERC, the RNA component of the telomerase reverse transcriptase (TERT) holoenzyme. Functionally, promotes cell to cell and cell to substratum adhesion, increases the cell proliferation rate and leads to cytokeratin hyper-expression. The sequence is that of H/ACA ribonucleoprotein complex subunit DKC1 from Homo sapiens (Human).